A 124-amino-acid polypeptide reads, in one-letter code: Small ribosomal subunit protein uS12 (124 aa).

Aspartate 89 is modified (3-methylthioaspartic acid).

This sequence belongs to the universal ribosomal protein uS12 family. In terms of assembly, part of the 30S ribosomal subunit. Contacts proteins S8 and S17. May interact with IF1 in the 30S initiation complex.

Its function is as follows. With S4 and S5 plays an important role in translational accuracy. Interacts with and stabilizes bases of the 16S rRNA that are involved in tRNA selection in the A site and with the mRNA backbone. Located at the interface of the 30S and 50S subunits, it traverses the body of the 30S subunit contacting proteins on the other side and probably holding the rRNA structure together. The combined cluster of proteins S8, S12 and S17 appears to hold together the shoulder and platform of the 30S subunit. This is Small ribosomal subunit protein uS12 from Serratia proteamaculans (strain 568).